We begin with the raw amino-acid sequence, 427 residues long: Phosphatidylserine decarboxylase proenzyme 1, mitochondrial (427 aa).

Residues 1–77 (MRSYLRFSDR…RRFVYKLDQA (77 aa)) constitute a mitochondrion transit peptide. Topologically, residues 78–88 (VTAALGPNGRY) are mitochondrial matrix. Residues 89 to 107 (IAMVGMTASAVLLTFHYKF) traverse the membrane as a helical segment. The Mitochondrial intermembrane portion of the chain corresponds to 108 to 427 (REVIAATDNV…TEDERLFAFY (320 aa)). Active-site charge relay system; for autoendoproteolytic cleavage activity residues include Asp210, His268, and Ser379. The Schiff-base intermediate with substrate; via pyruvic acid; for decarboxylase activity role is filled by Ser379. A Pyruvic acid (Ser); by autocatalysis modification is found at Ser379.

The protein belongs to the phosphatidylserine decarboxylase family. PSD-B subfamily. Eukaryotic type I sub-subfamily. In terms of assembly, heterodimer of a large membrane-associated beta subunit and a small pyruvoyl-containing alpha subunit. The cofactor is pyruvate. Is synthesized initially as an inactive proenzyme. Formation of the active enzyme involves a self-maturation process in which the active site pyruvoyl group is generated from an internal serine residue via an autocatalytic post-translational modification. Two non-identical subunits are generated from the proenzyme in this reaction, and the pyruvate is formed at the N-terminus of the alpha chain, which is derived from the carboxyl end of the proenzyme. The autoendoproteolytic cleavage occurs by a canonical serine protease mechanism, in which the side chain hydroxyl group of the serine supplies its oxygen atom to form the C-terminus of the beta chain, while the remainder of the serine residue undergoes an oxidative deamination to produce ammonia and the pyruvoyl prosthetic group on the alpha chain. During this reaction, the Ser that is part of the protease active site of the proenzyme becomes the pyruvoyl prosthetic group, which constitutes an essential element of the active site of the mature decarboxylase.

The protein resides in the mitochondrion. The protein localises to the mitochondrion inner membrane. It carries out the reaction a 1,2-diacyl-sn-glycero-3-phospho-L-serine + H(+) = a 1,2-diacyl-sn-glycero-3-phosphoethanolamine + CO2. It functions in the pathway phospholipid metabolism; phosphatidylethanolamine biosynthesis; phosphatidylethanolamine from CDP-diacylglycerol: step 2/2. Catalyzes the formation of phosphatidylethanolamine (PtdEtn) from phosphatidylserine (PtdSer). Plays a central role in phospholipid metabolism and in the interorganelle trafficking of phosphatidylserine. The chain is Phosphatidylserine decarboxylase proenzyme 1, mitochondrial from Toxoplasma gondii (strain ATCC 50853 / GT1).